We begin with the raw amino-acid sequence, 333 residues long: Adenosine deaminase (333 aa).

2 residues coordinate Zn(2+): histidine 12 and histidine 14. Residues histidine 14, aspartate 16, and glycine 170 each coordinate substrate. Residue histidine 197 coordinates Zn(2+). Glutamate 200 serves as the catalytic Proton donor. Position 278 (aspartate 278) interacts with Zn(2+). Aspartate 279 serves as a coordination point for substrate.

This sequence belongs to the metallo-dependent hydrolases superfamily. Adenosine and AMP deaminases family. Adenosine deaminase subfamily. Requires Zn(2+) as cofactor.

The enzyme catalyses adenosine + H2O + H(+) = inosine + NH4(+). The catalysed reaction is 2'-deoxyadenosine + H2O + H(+) = 2'-deoxyinosine + NH4(+). Its function is as follows. Catalyzes the hydrolytic deamination of adenosine and 2-deoxyadenosine. This chain is Adenosine deaminase, found in Escherichia coli (strain SE11).